A 471-amino-acid polypeptide reads, in one-letter code: MSSKTLYDKVWDLHRIADLPGGATQLFVGLHLIHEVTSPQAFAALEEKGLSVNCPDRTIATVDHIVPTTNHQRPFSDPLAEEMLHTLEKNCSNHHIKLFGIGSGNQGIVHVMAPESGLTQPGMTIACGDSHTSTHGAFGAIAFGIGTSQVRDVLATQSLAMKKLKVRRIWVDGQLTNGVFAKDLILHVIRHLGVKGGVGYAYEFAGPAIKKLSMEERMTICNMAIEGGARCGYVNPDQTTFDYLEGKPYIPTGQEWESALQWWKELASDQNAIFDDEVKFDACKISPTVTWGITPGQAIGIDELIPKVDSLETSDQQTAREAYLYMNLHPGSSIEGLGIDVCFIGSCTNGRLSDLQAAAKIVKNRHVAKGIKAFVVPGSEKVAKAAEAEGLDVLFQNAGFEWRKPGCSMCLAMNPDRLEGNQISASSSNRNFKGRQGSARGRTLLMSPAMVAAAAISGSVTDVRNLINQGP.

The [4Fe-4S] cluster site is built by cysteine 347, cysteine 407, and cysteine 410.

Belongs to the aconitase/IPM isomerase family. LeuC type 1 subfamily. Heterodimer of LeuC and LeuD. It depends on [4Fe-4S] cluster as a cofactor.

It carries out the reaction (2R,3S)-3-isopropylmalate = (2S)-2-isopropylmalate. It functions in the pathway amino-acid biosynthesis; L-leucine biosynthesis; L-leucine from 3-methyl-2-oxobutanoate: step 2/4. Catalyzes the isomerization between 2-isopropylmalate and 3-isopropylmalate, via the formation of 2-isopropylmaleate. This Prochlorococcus marinus (strain MIT 9211) protein is 3-isopropylmalate dehydratase large subunit.